The sequence spans 132 residues: Inclusion membrane protein E (132 aa).

2 consecutive transmembrane segments (helical) span residues 41–61 (LGVV…AVGV) and 66–86 (FALG…ATSA).

Its subcellular location is the secreted. It is found in the host vacuole. The protein resides in the host pathogen-containing vacuole. It localises to the host pathogen-containing vacuole membrane. Functionally, inclusion membrane protein probably involved in early modification events of the chlamydial inclusion. The protein is Inclusion membrane protein E of Chlamydia trachomatis serovar L2 (strain ATCC VR-902B / DSM 19102 / 434/Bu).